The following is an 81-amino-acid chain: Sec-independent protein translocase protein TatA (81 aa).

The helical transmembrane segment at 1-21 threads the bilayer; the sequence is MGSLSLWHWIIVGAVLLLLFG. Residues 41-81 form a disordered region; sequence KKGLSEDDEKPEAARPAEPARSLDHQPVAEQPKVSETHRIG.

It belongs to the TatA/E family. As to quaternary structure, the Tat system comprises two distinct complexes: a TatABC complex, containing multiple copies of TatA, TatB and TatC subunits, and a separate TatA complex, containing only TatA subunits. Substrates initially bind to the TatABC complex, which probably triggers association of the separate TatA complex to form the active translocon.

It localises to the cell inner membrane. Part of the twin-arginine translocation (Tat) system that transports large folded proteins containing a characteristic twin-arginine motif in their signal peptide across membranes. TatA could form the protein-conducting channel of the Tat system. The chain is Sec-independent protein translocase protein TatA from Beijerinckia indica subsp. indica (strain ATCC 9039 / DSM 1715 / NCIMB 8712).